Consider the following 592-residue polypeptide: Protein alan shepard (592 aa).

The segment at 1–68 is disordered; the sequence is MGGPHHQHQQ…ASVAAAPPTP (68 aa). A compositionally biased stretch (gly residues) spans 18-28; that stretch reads VGGGNGHGGGA. The segment covering 36 to 54 has biased composition (polar residues); the sequence is PNSQQLPPQMPRSQNYANG. Positions 55–64 are enriched in low complexity; sequence SSSAASVAAA. A phosphotyrosine mark is found at Y124 and Y140. Residues 162 to 224 form a disordered region; it reads PATTTYGQRV…AQNQNQQGGE (63 aa). Residues 176-224 are compositionally biased toward low complexity; that stretch reads SPSNTNSSSSSNTGSQSGTLSTSLSNTTNTNTTMGPNGTAQNQNQQGGE. RRM domains are found at residues 229 to 307 and 319 to 398; these read TNLY…IWVL and TNLY…FADG. The tract at residues 565-592 is disordered; sequence PMTDSEQASTAASPDEAYTQYPHQAAPK.

Has a role in the perception of gravity. The chain is Protein alan shepard from Drosophila mojavensis (Fruit fly).